Here is a 106-residue protein sequence, read N- to C-terminus: Large ribosomal subunit protein eL42 (106 aa).

The protein belongs to the eukaryotic ribosomal protein eL42 family.

This is Large ribosomal subunit protein eL42 (RPL44) from Wickerhamomyces ciferrii (strain ATCC 14091 / BCRC 22168 / CBS 111 / JCM 3599 / NBRC 0793 / NRRL Y-1031 F-60-10) (Yeast).